Reading from the N-terminus, the 1359-residue chain is Regulatory-associated protein of TOR 2 (1359 aa).

Disordered stretches follow at residues 17-64 (SSAA…PQVA) and 782-819 (SDNS…QHSD). The span at 32–50 (HLVDDHLPVENGPDPRRDV) shows a compositional bias: basic and acidic residues. Residues 782 to 805 (SDNSATARDGRISTSSPIATNSIM) show a composition bias toward polar residues. Residues 806 to 819 (HGSPQSDDSSQHSD) show a composition bias toward low complexity. WD repeat units follow at residues 1041–1080 (RFEL…PVNT), 1087–1127 (SDRG…GGQK), 1139–1178 (RSAG…VNTI), 1181–1221 (TADS…RLVY), 1228–1269 (PRSE…EPYL), 1273–1312 (AHRG…LTII), and 1321–1359 (QRIG…YQVR).

This sequence belongs to the WD repeat RAPTOR family. The target of rapamycin complex 1 (TORC1) is composed of at least RAPTOR, LST8 and TOR.

Component of TORC1 complex, which is an essential cell growth regulator that controls plant development. Acts by recruiting substrates for TOR. Acts by activating transcription, protein synthesis and ribosome biogenesis, and inhibiting mRNA degradation and autophagy. This chain is Regulatory-associated protein of TOR 2 (RAPTOR2), found in Oryza sativa subsp. japonica (Rice).